Here is a 261-residue protein sequence, read N- to C-terminus: uncharacterized protein (261 aa).

A signal peptide spans 1–22 (MRYLKKVTIYISLLILTIFIGG). Residue C23 is the site of N-palmitoyl cysteine attachment. A lipid anchor (S-diacylglycerol cysteine) is attached at C23.

Belongs to the staphylococcal tandem lipoprotein family.

The protein localises to the cell membrane. This is an uncharacterized protein from Staphylococcus epidermidis (strain ATCC 35984 / DSM 28319 / BCRC 17069 / CCUG 31568 / BM 3577 / RP62A).